Here is a 921-residue protein sequence, read N- to C-terminus: MKTCWKIPVFFFVCSFLEPWASAAVKRRPRFPVNSNSNGGNELCPKIRIGQDDLPGFDLISQFQVDKAASRRAIQRVVGSATLQVAYKLGNNVDFRIPTRNLYPSGLPEEYSFLTTFRMTGSTLKKNWNIWQIQDSSGKEQVGIKINGQTQSVVFSYKGLDGSLQTAAFSNLSSLFDSQWHKIMIGVERSSATLFVDCNRIESLPIKPRGPIDIDGFAVLGKLADNPQVSVPFELQWMLIHCDPLRPRRETCHELPARITPSQTTDERGPPGEQGPPGPPGPPGVPGIDGIDGDRGPKGPPGPPGPAGEPGKPGAPGKPGTPGADGLTGPDGSPGSIGSKGQKGEPGVPGSRGFPGRGIPGPPGPPGTAGLPGELGRVGPVGDPGRRGPPGPPGPPGPRGTIGFHDGDPLCPNACPPGRSGYPGLPGMRGHKGAKGEIGEPGRQGHKGEEGDQGELGEVGAQGPPGAQGLRGITGIVGDKGEKGARGLDGEPGPQGLPGAPGDQGQRGPPGEAGPKGDRGAEGARGIPGLPGPKGDTGLPGVDGRDGIPGMPGTKGEPGKPGPPGDAGLQGLPGVPGIPGAKGVAGEKGSTGAPGKPGQMGNSGKPGQQGPPGEVGPRGPQGLPGSRGELGPVGSPGLPGKLGSLGSPGLPGLPGPPGLPGMKGDRGVVGEPGPKGEQGASGEEGEAGERGELGDIGLPGPKGSAGNPGEPGLRGPEGSRGLPGVEGPRGPPGPRGVQGEQGATGLPGVQGPPGRAPTDQHIKQVCMRVIQEHFAEMAASLKRPDSGATGLPGRPGPPGPPGPPGENGFPGQMGIRGLPGIKGPPGALGLRGPKGDLGEKGERGPPGRGPNGLPGAIGLPGDPGPASYGRNGRDGERGPPGVAGIPGVPGPPGPPGLPGFCEPASCTMQAGQRAFNKGPDP.

The signal sequence occupies residues 1–23 (MKTCWKIPVFFFVCSFLEPWASA). The interval 24–268 (AVKRRPRFPV…ITPSQTTDER (245 aa)) is nonhelical region (NC4). Intrachain disulfides connect Cys-44–Cys-242 and Cys-198–Cys-252. Positions 50 to 244 (GQDDLPGFDL…LQWMLIHCDP (195 aa)) constitute a Laminin G-like domain. A glycan (N-linked (GlcNAc...) asparagine) is linked at Asn-171. Zn(2+)-binding residues include Asp-213, Asp-215, and His-253. Disordered regions lie at residues 254–759 (ELPA…APTD) and 783–905 (RPDS…EPAS). Collagen-like domains lie at 269–324 (GPPG…TPGA), 325–356 (DGLT…GFPG), 358–403 (GIPG…GTIG), 416–472 (PPGR…GLRG), 473–516 (ITGI…AGPK), 587–643 (EKGS…GKLG), 655–712 (GPPG…GEPG), and 713–755 (LRGP…PPGR). Residues 269–405 (GPPGEQGPPG…PGPRGTIGFH (137 aa)) are triple-helical region (COL3). 2 stretches are compositionally biased toward pro residues: residues 273-285 (EQGP…PPGV) and 298-307 (KGPPGPPGPA). Residues 368–383 (TAGLPGELGRVGPVGD) are compositionally biased toward low complexity. The segment covering 387-398 (RGPPGPPGPPGP) has biased composition (pro residues). A nonhelical region (NC3) region spans residues 406-417 (DGDPLCPNACPP). Residues 418–756 (GRSGYPGLPG…PGVQGPPGRA (339 aa)) form a triple-helical region (COL2) region. Positions 479–489 (DKGEKGARGLD) are enriched in basic and acidic residues. 2 stretches are compositionally biased toward low complexity: residues 602–621 (NSGK…RGPQ) and 630–650 (LGPV…SPGL). The nonhelical region (NC2) stretch occupies residues 757–786 (PTDQHIKQVCMRVIQEHFAEMAASLKRPDS). The triple-helical region (COL1) stretch occupies residues 787 to 901 (GATGLPGRPG…PGPPGLPGFC (115 aa)). 2 Collagen-like domains span residues 790–847 (GLPG…GPPG) and 848–899 (RGPN…GLPG). Residues 794–804 (RPGPPGPPGPP) show a composition bias toward pro residues. Basic and acidic residues predominate over residues 833 to 845 (PKGDLGEKGERGP). Pro residues predominate over residues 888 to 897 (VPGPPGPPGL). A nonhelical region (NC1) region spans residues 902–921 (EPASCTMQAGQRAFNKGPDP).

Belongs to the fibril-associated collagens with interrupted helices (FACIT) family. In terms of assembly, heterotrimer of an alpha 1(IX), an alpha 2(IX) and an alpha 3(IX) chain. Post-translationally, covalently linked to the telopeptides of type II collagen by lysine-derived cross-links. In terms of processing, prolines at the third position of the tripeptide repeating unit (G-X-Y) are hydroxylated in some or all of the chains.

It is found in the secreted. Its subcellular location is the extracellular space. The protein localises to the extracellular matrix. Structural component of hyaline cartilage and vitreous of the eye. The sequence is that of Collagen alpha-1(IX) chain (COL9A1) from Homo sapiens (Human).